Consider the following 128-residue polypeptide: Small ribosomal subunit protein uS11 (128 aa).

This sequence belongs to the universal ribosomal protein uS11 family. Part of the 30S ribosomal subunit. Interacts with proteins S7 and S18. Binds to IF-3.

Its function is as follows. Located on the platform of the 30S subunit, it bridges several disparate RNA helices of the 16S rRNA. Forms part of the Shine-Dalgarno cleft in the 70S ribosome. This is Small ribosomal subunit protein uS11 from Wolbachia sp. subsp. Drosophila simulans (strain wRi).